The primary structure comprises 471 residues: 5-hydroxytryptamine receptor 2A (471 aa).

Residues 1-80 (MDILCEENTS…LQEKNWSALL (80 aa)) are Extracellular-facing. Asn-38 is a glycosylation site (N-linked (GlcNAc...) asparagine). Residues 81–97 (TAVVIILTIAGNILVIM) form a helical membrane-spanning segment. At 98-111 (AVSLEKKLQNATNY) the chain is on the cytoplasmic side. A helical membrane pass occupies residues 112 to 137 (FLMSLAIADMLLGFLVMPVSMLTILY). Residues 138–146 (GYRWPLPSK) lie on the Extracellular side of the membrane. A helical transmembrane segment spans residues 147-171 (LCAVWIYLDVLFSTASIMHLCAISL). Cys-148 and Cys-227 are joined by a disulfide. Asp-155 is a serotonin binding site. Positions 172–174 (DRY) match the DRY motif; important for ligand-induced conformation changes motif. Over 172-191 (DRYVAIQNPIHHSRFNSRTK) the chain is Cytoplasmic. Residues 192–215 (AFLKIIAVWTISVGISMPIPVFGL) form a helical membrane-spanning segment. At 216–232 (QDDSKVFKEGSCLLADD) the chain is on the extracellular side. A helical transmembrane segment spans residues 233–258 (NFVLIGSFVSFFIPLTIMVITYFLTI). At 259 to 322 (KSLQKEATLC…QSISNEQKAC (64 aa)) the chain is on the cytoplasmic side. Ser-280 carries the post-translational modification Phosphoserine. A helical transmembrane segment spans residues 323–348 (KVLGIVFSLFVVMWCPFFITNIMAVI). Asn-343 serves as a coordination point for serotonin. Cysteines 349 and 353 form a disulfide. Topologically, residues 349 to 356 (CKESCNED) are extracellular. The helical transmembrane segment at 357–382 (VIGALLNVFVWIGYLSSAVNPLVYTL) threads the bilayer. The NPxxY motif; important for ligand-induced conformation changes and signaling signature appears at 376–380 (NPLVY). At 383 to 471 (FNKTYRSAFS…DGVNEKVSCV (89 aa)) the chain is on the cytoplasmic side. The disordered stretch occupies residues 450–471 (KQHSEDASKDNSDGVNEKVSCV). A compositionally biased stretch (basic and acidic residues) spans 451-465 (QHSEDASKDNSDGVN). The PDZ-binding signature appears at 469-471 (SCV).

It belongs to the G-protein coupled receptor 1 family. Interacts (via C-terminus) with MPDZ and PATJ. May interact (via C-terminus) with MPP3, PRDX6, DLG4, DLG1, CASK, APBA1 and MAGI2. Interacts with GRM2 and DRD2; this may affect signaling.

Its subcellular location is the cell membrane. The protein localises to the cell projection. It localises to the dendrite. It is found in the axon. The protein resides in the cytoplasmic vesicle. Its subcellular location is the membrane. The protein localises to the caveola. It localises to the presynapse. Its activity is regulated as follows. G-protein coupled receptor activity is regulated by lipids: oleamide increases HTR2A-mediated activity. Functionally, G-protein coupled receptor for 5-hydroxytryptamine (serotonin). Also functions as a receptor for various drugs and psychoactive substances, including mescaline, psilocybin, 1-(2,5-dimethoxy-4-iodophenyl)-2-aminopropane (DOI) and lysergic acid diethylamide (LSD). Ligand binding causes a conformation change that triggers signaling via guanine nucleotide-binding proteins (G proteins) and modulates the activity of downstream effectors. HTR2A is coupled to G(q)/G(11) G alpha proteins and activates phospholipase C-beta, releasing diacylglycerol (DAG) and inositol 1,4,5-trisphosphate (IP3) second messengers that modulate the activity of phosphatidylinositol 3-kinase and promote the release of Ca(2+) ions from intracellular stores, respectively. Beta-arrestin family members inhibit signaling via G proteins and mediate activation of alternative signaling pathways. Affects neural activity, perception, cognition and mood. Plays a role in the regulation of behavior, including responses to anxiogenic situations and psychoactive substances. Plays a role in intestinal smooth muscle contraction, and may play a role in arterial vasoconstriction. The sequence is that of 5-hydroxytryptamine receptor 2A (HTR2A) from Pongo pygmaeus (Bornean orangutan).